Consider the following 359-residue polypeptide: Protein disulfide-isomerase C17H9.14c (359 aa).

Residues 1-19 (MRLPLLSFVIFALFALVFA) form the signal peptide. Thioredoxin domains lie at 20-130 (SGVV…EKTG) and 134-250 (RKIV…KKSG). Active-site nucleophile residues include cysteine 51 and cysteine 54. 2 disulfide bridges follow: cysteine 51–cysteine 54 and cysteine 170–cysteine 173.

This sequence belongs to the protein disulfide isomerase family.

It carries out the reaction Catalyzes the rearrangement of -S-S- bonds in proteins.. In terms of biological role, participates in the folding of proteins containing disulfide bonds, may be involved in glycosylation, prolyl hydroxylation and triglyceride transfer. The protein is Protein disulfide-isomerase C17H9.14c of Schizosaccharomyces pombe (strain 972 / ATCC 24843) (Fission yeast).